The following is a 308-amino-acid chain: Shikimate kinase 1, chloroplastic (308 aa).

Residues 1–62 constitute a chloroplast transit peptide; it reads MEAGVGLALQ…RGSKPVAPLR (62 aa). 103–110 serves as a coordination point for ATP; that stretch reads GMMGSGKS. A Mg(2+)-binding site is contributed by Ser110. Substrate contacts are provided by Asp128, Arg153, and Gly175. Arg214 provides a ligand contact to ATP.

Belongs to the shikimate kinase family. Mg(2+) is required as a cofactor. As to expression, expressed in panicles.

It is found in the plastid. Its subcellular location is the chloroplast. The catalysed reaction is shikimate + ATP = 3-phosphoshikimate + ADP + H(+). The protein operates within metabolic intermediate biosynthesis; chorismate biosynthesis; chorismate from D-erythrose 4-phosphate and phosphoenolpyruvate: step 5/7. In terms of biological role, catalyzes the specific phosphorylation of the 3-hydroxyl group of shikimic acid using ATP as a cosubstrate. In Oryza sativa subsp. japonica (Rice), this protein is Shikimate kinase 1, chloroplastic (SK1).